A 450-amino-acid chain; its full sequence is tRNA modification GTPase MnmE (450 aa).

(6S)-5-formyl-5,6,7,8-tetrahydrofolate-binding residues include R20, E78, and K117. In terms of domain architecture, TrmE-type G spans 211–372 (GLRMVIVGKP…LEESIYRETQ (162 aa)). N221 contributes to the K(+) binding site. Residues 221-226 (NVGKST), 240-246 (TDIPGTT), and 265-268 (DTAG) contribute to the GTP site. Residue S225 coordinates Mg(2+). K(+) is bound by residues T240, I242, and T245. T246 contacts Mg(2+). K450 contributes to the (6S)-5-formyl-5,6,7,8-tetrahydrofolate binding site.

The protein belongs to the TRAFAC class TrmE-Era-EngA-EngB-Septin-like GTPase superfamily. TrmE GTPase family. Homodimer. Heterotetramer of two MnmE and two MnmG subunits. K(+) serves as cofactor.

Its subcellular location is the cytoplasm. In terms of biological role, exhibits a very high intrinsic GTPase hydrolysis rate. Involved in the addition of a carboxymethylaminomethyl (cmnm) group at the wobble position (U34) of certain tRNAs, forming tRNA-cmnm(5)s(2)U34. In Thermotoga sp. (strain RQ2), this protein is tRNA modification GTPase MnmE.